Here is a 304-residue protein sequence, read N- to C-terminus: MISDYDALLQFNKKPVSQEMIQFLATSTASIIKIRENNNPIQGCRPPDLSIFIKNVVIQSNVQTPTLMATSVYLNKLKSVIPKNVYGINTTRHRIFLGCLILAAKTLNDSSPWNKHWTTYTEGLLRIREVNTIERELLEYLNWDVRITTPDLIDSLSYFLGPIKEQLFLQRRQEMLLFNAPSPGQLKEYINHRRPVSHSRTSSAISVPSLTSMATVSTTDSRSSLLAKYQPSLPLVESDNFNKKNHVPLRNNNDICNNFRAEENIHSVNHIDVTMGSSPVMSHKPTIHQRLNFTRRGWSSFFKQ.

The region spanning 19–146 (EMIQFLATST…LLEYLNWDVR (128 aa)) is the Cyclin N-terminal domain.

This sequence belongs to the cyclin family. PCL1,2 subfamily. As to quaternary structure, forms a cyclin-CDK complex with PHO85.

In terms of biological role, m/G1-specific cyclin partner of the cyclin-dependent kinase (CDK) PHO85. May have a role in bud site selection in G1 phase. The polypeptide is PHO85 cyclin-9 (PCL9) (Saccharomyces cerevisiae (strain ATCC 204508 / S288c) (Baker's yeast)).